A 252-amino-acid polypeptide reads, in one-letter code: Small ribosomal subunit protein uS2A (252 aa).

Ser-2 is modified (N-acetylserine). The disordered stretch occupies residues 209–252 (EVEQQAAEETTSTGADAEESKEEVAEGQNEASEWAEENTEAVSW). Residues 241 to 252 (EWAEENTEAVSW) show a composition bias toward acidic residues.

Belongs to the universal ribosomal protein uS2 family. As to quaternary structure, component of the small ribosomal subunit. Mature ribosomes consist of a small (40S) and a large (60S) subunit. The 40S subunit contains about 33 different proteins and 1 molecule of RNA (18S). The 60S subunit contains about 49 different proteins and 3 molecules of RNA (25S, 5.8S and 5S). Interacts with RPS21.

It is found in the cytoplasm. Functionally, required for the assembly and/or stability of the 40S ribosomal subunit. Required for the processing of the 20S rRNA-precursor to mature 18S rRNA in a late step of the maturation of 40S ribosomal subunits. This chain is Small ribosomal subunit protein uS2A, found in Vanderwaltozyma polyspora (strain ATCC 22028 / DSM 70294 / BCRC 21397 / CBS 2163 / NBRC 10782 / NRRL Y-8283 / UCD 57-17) (Kluyveromyces polysporus).